Reading from the N-terminus, the 96-residue chain is UPF0213 protein BCE33L0031 (96 aa).

The GIY-YIG domain maps to 4-79 (NKHCFYVVEC…KQLNRKQKEE (76 aa)).

It belongs to the UPF0213 family.

The polypeptide is UPF0213 protein BCE33L0031 (Bacillus cereus (strain ZK / E33L)).